The chain runs to 415 residues: Serine hydroxymethyltransferase 1 (415 aa).

Residues leucine 122 and glycine 126–leucine 128 contribute to the (6S)-5,6,7,8-tetrahydrofolate site. At lysine 230 the chain carries N6-(pyridoxal phosphate)lysine.

It belongs to the SHMT family. Homodimer. It depends on pyridoxal 5'-phosphate as a cofactor.

The protein localises to the cytoplasm. The catalysed reaction is (6R)-5,10-methylene-5,6,7,8-tetrahydrofolate + glycine + H2O = (6S)-5,6,7,8-tetrahydrofolate + L-serine. It functions in the pathway one-carbon metabolism; tetrahydrofolate interconversion. The protein operates within amino-acid biosynthesis; glycine biosynthesis; glycine from L-serine: step 1/1. Catalyzes the reversible interconversion of serine and glycine with tetrahydrofolate (THF) serving as the one-carbon carrier. This reaction serves as the major source of one-carbon groups required for the biosynthesis of purines, thymidylate, methionine, and other important biomolecules. Also exhibits THF-independent aldolase activity toward beta-hydroxyamino acids, producing glycine and aldehydes, via a retro-aldol mechanism. This is Serine hydroxymethyltransferase 1 from Burkholderia thailandensis (strain ATCC 700388 / DSM 13276 / CCUG 48851 / CIP 106301 / E264).